Reading from the N-terminus, the 356-residue chain is Tyrosine recombinase XerS (356 aa).

A Core-binding (CB) domain is found at Val-16 to Thr-121. A Tyr recombinase domain is found at Ala-169–Asp-354. Catalysis depends on residues Arg-210, Lys-234, His-306, Arg-309, and His-332. Tyr-341 functions as the O-(3'-phospho-DNA)-tyrosine intermediate in the catalytic mechanism.

The protein belongs to the 'phage' integrase family. XerS subfamily.

The protein localises to the cytoplasm. FtsK is required for recombination. Site-specific tyrosine recombinase, which acts by catalyzing the cutting and rejoining of the recombining DNA molecules. Essential to convert dimers of the bacterial chromosome into monomers to permit their segregation at cell division. This chain is Tyrosine recombinase XerS, found in Streptococcus pyogenes serotype M28 (strain MGAS6180).